The primary structure comprises 236 residues: Regulatory protein cys-3 (236 aa).

Residues 26–89 are disordered; that stretch reads TLGQLQPIQP…MSVPPTPGAR (64 aa). The segment covering 28-37 has biased composition (polar residues); it reads GQLQPIQPNP. A bZIP domain is found at 99–162; that stretch reads LAAEEDKRKR…KWLKGLVTEK (64 aa). The segment at 105–137 is basic motif; sequence KRKRNTAASARFRIKKKQREQALEKSAKEMSEK. A leucine-zipper region spans residues 141-155; it reads LEGRIQALETENKWL. A disordered region spans residues 189 to 236; it reads AAAADKAEAAADKADAERAREESSFCVSTSSPSSDESVDTDNKKRRKD. Basic and acidic residues predominate over residues 193–211; the sequence is DKAEAAADKADAERAREES. Over residues 212-223 the composition is skewed to low complexity; it reads SFCVSTSSPSSD.

This sequence belongs to the bZIP family. GCN4 subfamily. As to quaternary structure, binds DNA as a dimer.

The protein resides in the nucleus. Functionally, turns on the expression of structural genes which encode sulfur-catabolic enzymes. Binds to sequence elements upstream of these genes. The polypeptide is Regulatory protein cys-3 (cys-3) (Neurospora crassa (strain ATCC 24698 / 74-OR23-1A / CBS 708.71 / DSM 1257 / FGSC 987)).